The following is a 217-amino-acid chain: Oxygen-insensitive NAD(P)H nitroreductase (217 aa).

Residue 10 to 14 (RHSTK) coordinates FMN. NAD(+)-binding residues include K14, T41, T67, N71, K74, and R107. Residue N71 participates in FMN binding. FMN-binding positions include 165 to 166 (EG) and 205 to 207 (KSR).

Belongs to the nitroreductase family. As to quaternary structure, homodimer. Requires FMN as cofactor.

Its function is as follows. Reduction of a variety of nitroaromatic compounds using NADH (and to lesser extent NADPH) as source of reducing equivalents; two electrons are transferred. This Enterobacter cloacae protein is Oxygen-insensitive NAD(P)H nitroreductase.